We begin with the raw amino-acid sequence, 390 residues long: GTPase Obg (390 aa).

The 159-residue stretch at 1-159 (MKFVDEASIL…RELLLELMLL (159 aa)) folds into the Obg domain. Residues 127–147 (NTRFKSSVNRTPRQKTNGTPG) form a disordered region. The segment covering 129-145 (RFKSSVNRTPRQKTNGT) has biased composition (polar residues). In terms of domain architecture, OBG-type G spans 160–333 (ADVGMLGMPN…LCWDVMTFII (174 aa)). GTP-binding positions include 166 to 173 (GMPNAGKS), 191 to 195 (FTTLV), 213 to 216 (DIPG), 283 to 286 (NKID), and 314 to 316 (SAA). Mg(2+)-binding residues include Ser173 and Thr193.

Belongs to the TRAFAC class OBG-HflX-like GTPase superfamily. OBG GTPase family. Monomer. It depends on Mg(2+) as a cofactor.

It is found in the cytoplasm. Functionally, an essential GTPase which binds GTP, GDP and possibly (p)ppGpp with moderate affinity, with high nucleotide exchange rates and a fairly low GTP hydrolysis rate. Plays a role in control of the cell cycle, stress response, ribosome biogenesis and in those bacteria that undergo differentiation, in morphogenesis control. The polypeptide is GTPase Obg (Escherichia coli O7:K1 (strain IAI39 / ExPEC)).